A 349-amino-acid chain; its full sequence is Phenylalanine--tRNA ligase alpha subunit (349 aa).

Residue Glu-258 participates in Mg(2+) binding.

It belongs to the class-II aminoacyl-tRNA synthetase family. Phe-tRNA synthetase alpha subunit type 1 subfamily. Tetramer of two alpha and two beta subunits. The cofactor is Mg(2+).

Its subcellular location is the cytoplasm. It carries out the reaction tRNA(Phe) + L-phenylalanine + ATP = L-phenylalanyl-tRNA(Phe) + AMP + diphosphate + H(+). This Rickettsia akari (strain Hartford) protein is Phenylalanine--tRNA ligase alpha subunit.